A 178-amino-acid polypeptide reads, in one-letter code: Caveolin-1 (178 aa).

The residue at position 2 (S2) is an N-acetylserine. The residue at position 2 (S2) is a Phosphoserine. The interval 2–94 is required for homooligomerization; it reads SGGKYVDSEG…WKASFTTFTV (93 aa). The Cytoplasmic segment spans residues 2–104; it reads SGGKYVDSEG…TKYWFYRLLS (103 aa). K5 carries the N6-acetyllysine; alternate modification. A Glycyl lysine isopeptide (Lys-Gly) (interchain with G-Cter in ubiquitin); alternate cross-link involves residue K5. At Y6 the chain carries Phosphotyrosine. S9 carries the post-translational modification Phosphoserine. Y14 carries the phosphotyrosine; by ABL1 modification. Y25 carries the post-translational modification Phosphotyrosine. Glycyl lysine isopeptide (Lys-Gly) (interchain with G-Cter in ubiquitin) cross-links involve residues K26, K30, K39, K47, and K57. The tract at residues 82–94 is interaction with CAVIN3; sequence DGIWKASFTTFTV. Positions 105 to 125 form an intramembrane region, helical; that stretch reads GIFGIPMALIWGVYFAILSFL. The Cytoplasmic segment spans residues 126–178; it reads HIWAVVPCIKSFLIEIQCISRVYSIYVHTFCDPLFEAIGKIFSNIRISTQKEI. Residues 131–142 are interacts with SPRY1, SPRY2, SPRY3 and SPRY4; it reads VPCIKSFLIEIQ. S-palmitoyl cysteine attachment occurs at residues C133, C143, and C156. The tract at residues 149–160 is interacts with SPRY1, SPRY2, and SPRY4; the sequence is SIYVHTFCDPLF. Positions 167-178 are interacts with SPRY1, SPRY2, SPRY3 and SPRY4; sequence FSNIRISTQKEI.

This sequence belongs to the caveolin family. Homooligomer. Interacts with GLIPR2. Interacts with NOSTRIN. Interacts with SNAP25 and STX1A. Interacts (via the N-terminus) with DPP4; the interaction is direct. Interacts with CTNNB1, CDH1 and JUP. Interacts with PACSIN2; this interaction induces membrane tubulation. Interacts with SLC7A9. Interacts with BMX and BTK. Interacts with TGFBR1. Interacts with CAVIN3 (via leucine-zipper domain) in a cholesterol-sensitive manner. Interacts with CAVIN1. Interacts with EHD2 in a cholesterol-dependent manner. Forms a ternary complex with UBXN6 and VCP; mediates CAV1 targeting to lysosomes for degradation. Interacts with ABCG1; this interaction regulates ABCG1-mediated cholesterol efflux. Interacts with NEU3; this interaction enhances NEU3 sialidase activity within caveola. Interacts (via C-terminus) with SPRY1, SPRY2 (via C-terminus), SPRY3, and SPRY4. Interacts with IGFBP5; this interaction allows trafficking of IGFBP5 from the plasma membrane to the nucleus. Post-translationally, phosphorylated at Tyr-14 by ABL1 in response to oxidative stress. In terms of processing, ubiquitinated. Undergo monoubiquitination and multi- and/or polyubiquitination. Monoubiquitination of N-terminal lysines promotes integration in a ternary complex with UBXN6 and VCP which promotes oligomeric CAV1 targeting to lysosomes for degradation. Ubiquitinated by ZNRF1; leading to degradation and modulation of the TLR4-mediated immune response.

It is found in the golgi apparatus membrane. The protein resides in the cell membrane. It localises to the membrane. The protein localises to the caveola. Its subcellular location is the membrane raft. In terms of biological role, may act as a scaffolding protein within caveolar membranes. Forms a stable heterooligomeric complex with CAV2 that targets to lipid rafts and drives caveolae formation. Mediates the recruitment of CAVIN proteins (CAVIN1/2/3/4) to the caveolae. Interacts directly with G-protein alpha subunits and can functionally regulate their activity. Involved in the costimulatory signal essential for T-cell receptor (TCR)-mediated T-cell activation. Its binding to DPP4 induces T-cell proliferation and NF-kappa-B activation in a T-cell receptor/CD3-dependent manner. Recruits CTNNB1 to caveolar membranes and may regulate CTNNB1-mediated signaling through the Wnt pathway. Negatively regulates TGFB1-mediated activation of SMAD2/3 by mediating the internalization of TGFBR1 from membrane rafts leading to its subsequent degradation. Binds 20(S)-hydroxycholesterol (20(S)-OHC). The sequence is that of Caveolin-1 (CAV1) from Echinops telfairi (Lesser hedgehog tenrec).